A 211-amino-acid chain; its full sequence is Cytochrome c biogenesis ATP-binding export protein CcmA (211 aa).

In terms of domain architecture, ABC transporter spans 6–211; that stretch reads LQTVALACER…RDIDLGNWAV (206 aa). 38-45 serves as a coordination point for ATP; the sequence is GPNGSGKT.

This sequence belongs to the ABC transporter superfamily. CcmA exporter (TC 3.A.1.107) family. The complex is composed of two ATP-binding proteins (CcmA) and two transmembrane proteins (CcmB).

It localises to the cell inner membrane. It carries out the reaction heme b(in) + ATP + H2O = heme b(out) + ADP + phosphate + H(+). Functionally, part of the ABC transporter complex CcmAB involved in the biogenesis of c-type cytochromes; once thought to export heme, this seems not to be the case, but its exact role is uncertain. Responsible for energy coupling to the transport system. The chain is Cytochrome c biogenesis ATP-binding export protein CcmA from Pseudomonas fluorescens (strain Pf0-1).